The primary structure comprises 538 residues: uncharacterized protein (538 aa).

The N-terminal stretch at M1–A17 is a signal peptide. The segment at R101–P131 is disordered. Residues K128 and K221 each participate in a glycyl lysine isopeptide (Lys-Gly) (interchain with G-Cter in SUMO2) cross-link. Phosphoserine is present on S224. Residues R233–D253 form a disordered region. S285 and S428 each carry phosphoserine. Residues L488 to C523 form a disordered region.

Its subcellular location is the secreted. This is an uncharacterized protein from Homo sapiens (Human).